A 451-amino-acid chain; its full sequence is 3-phosphoshikimate 1-carboxyvinyltransferase (451 aa).

Residues lysine 38, serine 39, and arginine 43 each contribute to the 3-phosphoshikimate site. Lysine 38 provides a ligand contact to phosphoenolpyruvate. The phosphoenolpyruvate site is built by glycine 111 and arginine 140. Residues serine 185, glutamine 187, aspartate 335, and lysine 362 each contribute to the 3-phosphoshikimate site. Glutamine 187 contacts phosphoenolpyruvate. Catalysis depends on aspartate 335, which acts as the Proton acceptor. Residues arginine 366 and arginine 408 each coordinate phosphoenolpyruvate.

It belongs to the EPSP synthase family. Monomer.

Its subcellular location is the cytoplasm. It catalyses the reaction 3-phosphoshikimate + phosphoenolpyruvate = 5-O-(1-carboxyvinyl)-3-phosphoshikimate + phosphate. It participates in metabolic intermediate biosynthesis; chorismate biosynthesis; chorismate from D-erythrose 4-phosphate and phosphoenolpyruvate: step 6/7. Functionally, catalyzes the transfer of the enolpyruvyl moiety of phosphoenolpyruvate (PEP) to the 5-hydroxyl of shikimate-3-phosphate (S3P) to produce enolpyruvyl shikimate-3-phosphate and inorganic phosphate. The protein is 3-phosphoshikimate 1-carboxyvinyltransferase of Crocosphaera subtropica (strain ATCC 51142 / BH68) (Cyanothece sp. (strain ATCC 51142)).